A 609-amino-acid chain; its full sequence is Pentatricopeptide repeat-containing protein At5g13770, chloroplastic (609 aa).

The transit peptide at 1-44 (MAIASGSWVATVNHHANPHSFTSPTKPIFFLSQKPHNFHVCSSR) directs the protein to the chloroplast. 13 PPR repeats span residues 103–137 (ELRT…KALP), 138–168 (DGQT…FRSD), 172–207 (AVSA…GVEP), 208–242 (SPGC…RLSF), 247–281 (SGSI…GIPE), 282–316 (SSEL…KLLK), 317–351 (DPEM…ELKV), 352–386 (TDCI…ECEA), 387–421 (GQVT…GFDK), 422–456 (CVVA…GCKP), 457–491 (NIWI…KVLP), 492–526 (DKVS…RGKI), and 527–561 (DRAM…GTRL).

This sequence belongs to the PPR family. P subfamily.

The protein resides in the plastid. It localises to the chloroplast. The polypeptide is Pentatricopeptide repeat-containing protein At5g13770, chloroplastic (Arabidopsis thaliana (Mouse-ear cress)).